Consider the following 231-residue polypeptide: 2-C-methyl-D-erythritol 4-phosphate cytidylyltransferase (231 aa).

Belongs to the IspD/TarI cytidylyltransferase family. IspD subfamily.

It carries out the reaction 2-C-methyl-D-erythritol 4-phosphate + CTP + H(+) = 4-CDP-2-C-methyl-D-erythritol + diphosphate. It functions in the pathway isoprenoid biosynthesis; isopentenyl diphosphate biosynthesis via DXP pathway; isopentenyl diphosphate from 1-deoxy-D-xylulose 5-phosphate: step 2/6. Its function is as follows. Catalyzes the formation of 4-diphosphocytidyl-2-C-methyl-D-erythritol from CTP and 2-C-methyl-D-erythritol 4-phosphate (MEP). The polypeptide is 2-C-methyl-D-erythritol 4-phosphate cytidylyltransferase (Shewanella piezotolerans (strain WP3 / JCM 13877)).